The chain runs to 112 residues: DNA-binding protein PF1087 (112 aa).

It belongs to the PDCD5 family.

The protein is DNA-binding protein PF1087 of Pyrococcus furiosus (strain ATCC 43587 / DSM 3638 / JCM 8422 / Vc1).